Consider the following 248-residue polypeptide: 21S rRNA pseudouridine(2819) synthase (248 aa).

D58 is a catalytic residue.

This sequence belongs to the pseudouridine synthase RluA family.

The protein localises to the mitochondrion. The enzyme catalyses uridine(2819) in 21S rRNA = pseudouridine(2819) in 21S rRNA. Its function is as follows. Pseudouridylate synthase responsible for the pseudouridine-2819 formation in mitochondrial 21S rRNA. May modulate the efficiency or the fidelity of the mitochondrial translation machinery. This is 21S rRNA pseudouridine(2819) synthase (PUS5) from Candida albicans (strain SC5314 / ATCC MYA-2876) (Yeast).